The chain runs to 149 residues: Aquaporin-like protein 2 (149 aa).

The disordered stretch occupies residues Met-1 to Ser-35. Topologically, residues Met-1–His-47 are cytoplasmic. A helical membrane pass occupies residues Phe-48 to Ile-68. Residues Cys-69 to Gln-89 are Extracellular-facing. A helical transmembrane segment spans residues Leu-90–Trp-110. At Gly-111 to Arg-149 the chain is on the cytoplasmic side.

This sequence belongs to the MIP/aquaporin (TC 1.A.8) family.

The protein resides in the endoplasmic reticulum membrane. The protein localises to the cell membrane. Its function is as follows. Water channel required to facilitate the transport of water across membranes. Involved in freeze tolerance, osmotolerance and cell flocculation in liquid cultures. Is non-functional in most laboratory strains. This Saccharomyces cerevisiae (strain Lalvin EC1118 / Prise de mousse) (Baker's yeast) protein is Aquaporin-like protein 2 (AQY2-2).